Here is a 644-residue protein sequence, read N- to C-terminus: Arginine--tRNA ligase (644 aa).

The 'HIGH' region signature appears at 134 to 144; that stretch reads VNPTKPLHMGH.

It belongs to the class-I aminoacyl-tRNA synthetase family.

The protein localises to the cytoplasm. The catalysed reaction is tRNA(Arg) + L-arginine + ATP = L-arginyl-tRNA(Arg) + AMP + diphosphate. This is Arginine--tRNA ligase from Thermococcus sibiricus (strain DSM 12597 / MM 739).